The primary structure comprises 217 residues: DNA transformation protein TfoX (217 aa).

Belongs to the Sxy/TfoX family.

In terms of biological role, required for DNA transformation. Positively regulates genes required for DNA transformation (late competence-specific genes) in association with CRP. Required for expression of the late competence-specific gene, com101A. Required for expression of the dprABC operon. The polypeptide is DNA transformation protein TfoX (Haemophilus influenzae (strain ATCC 51907 / DSM 11121 / KW20 / Rd)).